A 478-amino-acid polypeptide reads, in one-letter code: Serine/threonine-protein phosphatase T (478 aa).

TPR repeat units follow at residues 9 to 42 (ATAL…YDRE), 43 to 76 (PSFF…DPAY), and 78 to 110 (KAYW…EPNN). The tract at residues 151–463 (AVDDSYDGVR…QVFEAVPHPD (313 aa)) is catalytic. 4 residues coordinate Mn(2+): Asp-221, His-223, Asp-250, and Asn-282. The active-site Proton donor/acceptor is His-283. Mn(2+) is bound by residues His-331 and His-408.

This sequence belongs to the PPP phosphatase family. PP-5 (PP-T) subfamily. Requires Mg(2+) as cofactor. Mn(2+) is required as a cofactor.

The protein localises to the nucleus. The enzyme catalyses O-phospho-L-seryl-[protein] + H2O = L-seryl-[protein] + phosphate. It catalyses the reaction O-phospho-L-threonyl-[protein] + H2O = L-threonyl-[protein] + phosphate. In terms of biological role, protein phosphatase that specifically binds to and dephosphorylates the molecular chaperone Hsp90. Dephosphorylation positively regulates the Hsp90 chaperone machinery. This Aspergillus oryzae (strain ATCC 42149 / RIB 40) (Yellow koji mold) protein is Serine/threonine-protein phosphatase T.